The following is a 488-amino-acid chain: Inosine-5'-monophosphate dehydrogenase (488 aa).

CBS domains are found at residues 95–153 and 157–216; these read VISN…SIKI and MTKD…AKDE. Residues Asp250 and 300–302 contribute to the NAD(+) site; that span reads GIG. K(+) contacts are provided by Gly302 and Gly304. Position 305 (Ser305) interacts with IMP. Cys307 serves as a coordination point for K(+). The active-site Thioimidate intermediate is Cys307. Residues 340 to 342, 363 to 364, and 387 to 391 contribute to the IMP site; these read DGG, GS, and YRGMG. The active-site Proton acceptor is the Arg403. Residue Glu417 coordinates IMP. Residues 467–488 are disordered; sequence AGLAESHPHNVQITKESPNYSF. Residues Glu471, Ser472, and His473 each contribute to the K(+) site. Residues 475–488 show a composition bias toward polar residues; that stretch reads HNVQITKESPNYSF.

It belongs to the IMPDH/GMPR family. In terms of assembly, homotetramer. K(+) is required as a cofactor.

It catalyses the reaction IMP + NAD(+) + H2O = XMP + NADH + H(+). It functions in the pathway purine metabolism; XMP biosynthesis via de novo pathway; XMP from IMP: step 1/1. Mycophenolic acid (MPA) is a non-competitive inhibitor that prevents formation of the closed enzyme conformation by binding to the same site as the amobile flap. In contrast, mizoribine monophosphate (MZP) is a competitive inhibitor that induces the closed conformation. MPA is a potent inhibitor of mammalian IMPDHs but a poor inhibitor of the bacterial enzymes. MZP is a more potent inhibitor of bacterial IMPDH. In terms of biological role, catalyzes the conversion of inosine 5'-phosphate (IMP) to xanthosine 5'-phosphate (XMP), the first committed and rate-limiting step in the de novo synthesis of guanine nucleotides, and therefore plays an important role in the regulation of cell growth. In Staphylococcus epidermidis (strain ATCC 35984 / DSM 28319 / BCRC 17069 / CCUG 31568 / BM 3577 / RP62A), this protein is Inosine-5'-monophosphate dehydrogenase.